The following is a 493-amino-acid chain: tRNA(Ile)-lysidine synthase, chloroplastic (493 aa).

68 to 73 (SGGQDS) serves as a coordination point for ATP.

The protein belongs to the tRNA(Ile)-lysidine synthase family.

The protein resides in the plastid. Its subcellular location is the chloroplast. The enzyme catalyses cytidine(34) in tRNA(Ile2) + L-lysine + ATP = lysidine(34) in tRNA(Ile2) + AMP + diphosphate + H(+). Functionally, ligates lysine onto the cytidine present at position 34 of the AUA codon-specific tRNA(Ile) that contains the anticodon CAU, in an ATP-dependent manner. Cytidine is converted to lysidine, thus changing the amino acid specificity of the tRNA from methionine to isoleucine. In Staurastrum punctulatum (Green alga), this protein is tRNA(Ile)-lysidine synthase, chloroplastic.